The sequence spans 639 residues: ATP-dependent rRNA helicase spb4 (639 aa).

A Q motif motif is present at residues 14 to 42; that stretch reads WEAVSPSLSEWVLDAVASWGFSKMTPVQA. The 205-residue stretch at 45–249 folds into the Helicase ATP-binding domain; the sequence is IPLFMAHKDV…RVGLRNPVKV (205 aa). 58–65 is a binding site for ATP; that stretch reads AVTGSGKT. Residues 197–200 carry the DEAD box motif; it reads DEAD. Residues 283 to 437 enclose the Helicase C-terminal domain; sequence TLRPILTSLQ…PISISDSDAS (155 aa). Positions 521–624 form a coiled coil; sequence AYKDKQREKR…LRRAEKAAGK (104 aa). A disordered region spans residues 536–639; it reads QESAEAGAQQ…GDDDEFEGFD (104 aa). The segment covering 575-622 has biased composition (basic and acidic residues); sequence KHLQQEKRRWEKMTEEEKQKARETQKMLEEIRQKNEEARALRRAEKAA. The segment covering 628-639 has biased composition (acidic residues); sequence NDGDDDEFEGFD.

It belongs to the DEAD box helicase family. DDX55/SPB4 subfamily. Component of pre-60S ribosomal complexes.

It localises to the nucleus. Its subcellular location is the nucleolus. It catalyses the reaction ATP + H2O = ADP + phosphate + H(+). ATP-binding RNA helicase involved in the biogenesis of 60S ribosomal subunits. Binds 90S pre-ribosomal particles and dissociates from pre-60S ribosomal particles after processing of 27SB pre-rRNA. Required for the normal formation of 18S rRNA through the processing of pre-rRNAs at sites A0, A1 and A2, and the normal formation of 25S and 5.8S rRNAs through the processing of pre-rRNAs at sites C1 and C2. This chain is ATP-dependent rRNA helicase spb4, found in Aspergillus terreus (strain NIH 2624 / FGSC A1156).